Reading from the N-terminus, the 273-residue chain is Dermonecrotic toxin LdSicTox-alphaIB1av (273 aa).

Residue His-5 is part of the active site. The Mg(2+) site is built by Glu-25 and Asp-27. His-41 serves as the catalytic Nucleophile. 2 disulfides stabilise this stretch: Cys-45-Cys-51 and Cys-47-Cys-190. Residue Asp-85 participates in Mg(2+) binding. N-linked (GlcNAc...) asparagine glycosylation occurs at Asn-250.

The protein belongs to the arthropod phospholipase D family. Class II subfamily. Mg(2+) is required as a cofactor. In terms of tissue distribution, expressed by the venom gland.

It is found in the secreted. The enzyme catalyses an N-(acyl)-sphingosylphosphocholine = an N-(acyl)-sphingosyl-1,3-cyclic phosphate + choline. The catalysed reaction is an N-(acyl)-sphingosylphosphoethanolamine = an N-(acyl)-sphingosyl-1,3-cyclic phosphate + ethanolamine. It catalyses the reaction a 1-acyl-sn-glycero-3-phosphocholine = a 1-acyl-sn-glycero-2,3-cyclic phosphate + choline. It carries out the reaction a 1-acyl-sn-glycero-3-phosphoethanolamine = a 1-acyl-sn-glycero-2,3-cyclic phosphate + ethanolamine. Dermonecrotic toxins cleave the phosphodiester linkage between the phosphate and headgroup of certain phospholipids (sphingolipid and lysolipid substrates), forming an alcohol (often choline) and a cyclic phosphate. This toxin acts on sphingomyelin (SM). It may also act on ceramide phosphoethanolamine (CPE), lysophosphatidylcholine (LPC) and lysophosphatidylethanolamine (LPE), but not on lysophosphatidylserine (LPS), and lysophosphatidylglycerol (LPG). It acts by transphosphatidylation, releasing exclusively cyclic phosphate products as second products. Induces dermonecrosis, hemolysis, increased vascular permeability, edema, inflammatory response, and platelet aggregation. This chain is Dermonecrotic toxin LdSicTox-alphaIB1av, found in Loxosceles deserta (Desert recluse spider).